The chain runs to 299 residues: MTESNRLRIAIQKSGRLSTDSQQLLKSCGVKFSINEQRLIAHADNMPIDLLRVRDDDIPGLVMDGVVDMGIIGENVLEEEQIERQTLNKPADCLKLRQLDFGSCRLSLAVPTEFSYADASSLEGLRIATSYPNLLRRFMQQKGITYRDCMLKGSVEVAPRAGLADGICDLVSTGATLEANGLYETEVIYRSMACIIQSTQTQTPTKQALIDKILSRVNGVIRARESKYILLHAPTETLDQIVALLPGAENPTVLPLNDDTNRVAIHAVSTEDLFWDTMEQLTALGASSILVMPIEKMMG.

This sequence belongs to the ATP phosphoribosyltransferase family. Long subfamily. The cofactor is Mg(2+).

Its subcellular location is the cytoplasm. The enzyme catalyses 1-(5-phospho-beta-D-ribosyl)-ATP + diphosphate = 5-phospho-alpha-D-ribose 1-diphosphate + ATP. It participates in amino-acid biosynthesis; L-histidine biosynthesis; L-histidine from 5-phospho-alpha-D-ribose 1-diphosphate: step 1/9. With respect to regulation, feedback inhibited by histidine. Catalyzes the condensation of ATP and 5-phosphoribose 1-diphosphate to form N'-(5'-phosphoribosyl)-ATP (PR-ATP). Has a crucial role in the pathway because the rate of histidine biosynthesis seems to be controlled primarily by regulation of HisG enzymatic activity. The polypeptide is ATP phosphoribosyltransferase (Shewanella baltica (strain OS155 / ATCC BAA-1091)).